The primary structure comprises 841 residues: DNA mismatch repair protein MutS (841 aa).

600–607 (GPNMAGKS) contacts ATP.

Belongs to the DNA mismatch repair MutS family.

In terms of biological role, this protein is involved in the repair of mismatches in DNA. It is possible that it carries out the mismatch recognition step. This protein has a weak ATPase activity. This Carboxydothermus hydrogenoformans (strain ATCC BAA-161 / DSM 6008 / Z-2901) protein is DNA mismatch repair protein MutS.